Consider the following 626-residue polypeptide: Phosphomethylpyrimidine synthase (626 aa).

Positions 1–22 (MTKQEKAINLSESAQVDQQSVQ) are disordered. Residues 10-22 (LSESAQVDQQSVQ) are compositionally biased toward polar residues. Residues N232, M261, Y290, H326, 346-348 (SRG), 387-390 (DGLR), and E426 each bind substrate. H430 lines the Zn(2+) pocket. Residue Y453 participates in substrate binding. H494 serves as a coordination point for Zn(2+). C574, C577, and C582 together coordinate [4Fe-4S] cluster.

The protein belongs to the ThiC family. As to quaternary structure, homodimer. Requires [4Fe-4S] cluster as cofactor.

The enzyme catalyses 5-amino-1-(5-phospho-beta-D-ribosyl)imidazole + S-adenosyl-L-methionine = 4-amino-2-methyl-5-(phosphooxymethyl)pyrimidine + CO + 5'-deoxyadenosine + formate + L-methionine + 3 H(+). It functions in the pathway cofactor biosynthesis; thiamine diphosphate biosynthesis. Functionally, catalyzes the synthesis of the hydroxymethylpyrimidine phosphate (HMP-P) moiety of thiamine from aminoimidazole ribotide (AIR) in a radical S-adenosyl-L-methionine (SAM)-dependent reaction. The polypeptide is Phosphomethylpyrimidine synthase (Pseudomonas putida (strain ATCC 700007 / DSM 6899 / JCM 31910 / BCRC 17059 / LMG 24140 / F1)).